We begin with the raw amino-acid sequence, 543 residues long: Protein P78/83 (543 aa).

Disordered regions lie at residues 147 to 222 (QALP…QPAA), 235 to 325 (RNEK…SLSN), and 373 to 400 (MAKS…ANTP). A compositionally biased stretch (pro residues) spans 182 to 221 (AAPPPPPSPVPNIPAPPPPPPPSMSELPPAPPMPTEPQPA). A WH2 domain is found at 226 to 246 (DRQQLLEAIRNEKNRTRLRPV). Residues 271–321 (PKPPSASPPPPPPPPPPPAPPAPPPMVDLSSAPPPPPLVDLPSEMLPPPAP) show a composition bias toward pro residues. Residues 375–384 (KSSSEATSND) show a composition bias toward polar residues.

In terms of assembly, forms a complex with proteins C42 and E27. Interacts with host actin-related protein 2/3 complex. Interacts with protein Ac102.

It localises to the host cytoplasm. The protein localises to the host nucleus. Plays a role in the transport of the nucleocapsids from the cytoplasm toward the host nucleus together with the host actin-polymerizing Arp2/3 complex. The polypeptide is Protein P78/83 (P61) (Lepidoptera (butterflies and moths)).